We begin with the raw amino-acid sequence, 255 residues long: Ribose-5-phosphate isomerase (255 aa).

This sequence belongs to the ribose 5-phosphate isomerase family.

The protein localises to the cytoplasm. The catalysed reaction is aldehydo-D-ribose 5-phosphate = D-ribulose 5-phosphate. Its pathway is carbohydrate degradation; pentose phosphate pathway; D-ribose 5-phosphate from D-ribulose 5-phosphate (non-oxidative stage): step 1/1. The sequence is that of Ribose-5-phosphate isomerase (RKI1) from Eremothecium gossypii (strain ATCC 10895 / CBS 109.51 / FGSC 9923 / NRRL Y-1056) (Yeast).